The chain runs to 211 residues: Pyrrolidone-carboxylate peptidase 1 (211 aa).

Catalysis depends on residues glutamate 79, cysteine 142, and histidine 164.

This sequence belongs to the peptidase C15 family. As to quaternary structure, homotetramer.

It is found in the cytoplasm. It carries out the reaction Release of an N-terminal pyroglutamyl group from a polypeptide, the second amino acid generally not being Pro.. In terms of biological role, removes 5-oxoproline from various penultimate amino acid residues except L-proline. This Saccharolobus solfataricus (strain ATCC 35092 / DSM 1617 / JCM 11322 / P2) (Sulfolobus solfataricus) protein is Pyrrolidone-carboxylate peptidase 1 (pcp1).